Here is a 228-residue protein sequence, read N- to C-terminus: MFFSLYERRQSLLHRAPPVAKVASFALLLLCCNAQSWCMHASLTLVLLALTLIVTRSLKCVAAHIRVVSIYLAFFFSLKILHTFFSTGVVSATQINQHIHAGYHIGIRLFLLLCASSLFYACTSRLELFSLCLRMGKVLHVRSTAYTTPCAVYVMMLVLYFGHDIFREWTELRFVWRARTRANTSFYNWVDATLHFSKTLLTRLLERAQHPSLRRADFKVSDNILSSE.

4 helical membrane-spanning segments follow: residues Trp37–Val54, Val67–Val89, His104–Leu126, and Val138–Tyr160.

The protein resides in the cell membrane. This is an uncharacterized protein from Treponema pallidum (strain Nichols).